We begin with the raw amino-acid sequence, 214 residues long: Guanylate kinase (214 aa).

The 187-residue stretch at 6 to 192 (GTLYIISAPS…ALEDLKSIFR (187 aa)) folds into the Guanylate kinase-like domain. 13-20 (APSGAGKT) is a binding site for ATP.

The protein belongs to the guanylate kinase family.

Its subcellular location is the cytoplasm. The enzyme catalyses GMP + ATP = GDP + ADP. Essential for recycling GMP and indirectly, cGMP. The polypeptide is Guanylate kinase (Pseudomonas syringae pv. tomato (strain ATCC BAA-871 / DC3000)).